We begin with the raw amino-acid sequence, 432 residues long: Homeobox protein Hox-D3 (432 aa).

4 disordered regions span residues 43-62 (YSTP…LDTD), 68-197 (CSIQ…SKRV), 253-280 (QKAK…AGHV), and 400-432 (HHGP…LTHL). Over residues 97–106 (NSQGGGGGSQ) the composition is skewed to gly residues. The span at 116–131 (PPQPPPPPPTLPPSSP) shows a compositional bias: pro residues. Polar residues predominate over residues 148-158 (NASSSSATISK). Positions 160–165 (IFPWMK) match the Antp-type hexapeptide motif. The segment at residues 194–253 (SKRVRTAYTSAQLVELEKEFHFNRYLCRPRRVEMANLLNLTERQIKIWFQNRRMKYKKDQ) is a DNA-binding region (homeobox).

The protein belongs to the Antp homeobox family.

The protein localises to the nucleus. Sequence-specific transcription factor which is part of a developmental regulatory system that provides cells with specific positional identities on the anterior-posterior axis. The sequence is that of Homeobox protein Hox-D3 (HOXD3) from Homo sapiens (Human).